A 591-amino-acid polypeptide reads, in one-letter code: NADH-quinone oxidoreductase subunit C/D (591 aa).

The segment at 1 to 182 (MVTVVENTDP…TPYFLNTAKQ (182 aa)) is NADH dehydrogenase I subunit C. Positions 206–591 (DFMFLNIGPN…IDIVMADCDR (386 aa)) are NADH dehydrogenase I subunit D.

In the N-terminal section; belongs to the complex I 30 kDa subunit family. The protein in the C-terminal section; belongs to the complex I 49 kDa subunit family. NDH-1 is composed of 13 different subunits. Subunits NuoB, CD, E, F, and G constitute the peripheral sector of the complex.

The protein resides in the cell inner membrane. It carries out the reaction a quinone + NADH + 5 H(+)(in) = a quinol + NAD(+) + 4 H(+)(out). Functionally, NDH-1 shuttles electrons from NADH, via FMN and iron-sulfur (Fe-S) centers, to quinones in the respiratory chain. The immediate electron acceptor for the enzyme in this species is believed to be ubiquinone. Couples the redox reaction to proton translocation (for every two electrons transferred, four hydrogen ions are translocated across the cytoplasmic membrane), and thus conserves the redox energy in a proton gradient. The sequence is that of NADH-quinone oxidoreductase subunit C/D from Psychrobacter cryohalolentis (strain ATCC BAA-1226 / DSM 17306 / VKM B-2378 / K5).